The primary structure comprises 3946 residues: Hybrid PKS-NRPS synthetase lepA (3946 aa).

Residues 9 to 440 form the Ketosynthase family 3 (KS3) domain; that stretch reads VEPIAIVGSA…GTNAHVILEG (432 aa). Residues Cys183, His320, and His363 each act as for beta-ketoacyl synthase activity in the active site. The segment at 553 to 871 is malonyl-CoA:ACP transacylase (MAT) domain; sequence IFTGQGAQWA…PYAGIMRRAT (319 aa). The interval 945-1073 is N-terminal hotdog fold; it reads HELLGRRAPD…GRLILFKGEG (129 aa). The tract at residues 945-1238 is dehydratase (DH) domain; sequence HELLGRRAPD…RLQSFTEAKA (294 aa). The PKS/mFAS DH domain maps to 945 to 1239; the sequence is HELLGRRAPD…LQSFTEAKAL (295 aa). The active-site Proton acceptor; for dehydratase activity is the His977. Residues 1088–1239 are C-terminal hotdog fold; the sequence is LSPLDREMFY…LQSFTEAKAL (152 aa). The Proton donor; for dehydratase activity role is filled by Asp1147. Residues 1380–1580 form a methyltransferase (MT) domain region; the sequence is LLNRFYTDGR…ATVSDLPSDG (201 aa). Residues 2093–2266 form a ketoreductase (KR) domain region; sequence TYWMIGLNSE…AASVIDIGLV (174 aa). Residues 2352-2365 show a composition bias toward low complexity; that stretch reads SSQDSDQSNSTSAS. The disordered stretch occupies residues 2352-2372; sequence SSQDSDQSNSTSASIRDQVSS. The Carrier 1 domain occupies 2378 to 2455; the sequence is EGTDVLLRCF…EICAEAIQKF (78 aa). Ser2415 is modified (O-(pantetheine 4'-phosphoryl)serine). A disordered region spans residues 2474–2531; the sequence is KQATASPPEIGREEAQSTSRAGILPTDQDNDNSSDSESQRKSGASSSSGSGTRTPTSI. Low complexity predominate over residues 2508 to 2530; the sequence is DSESQRKSGASSSSGSGTRTPTS. Positions 2547-2976 are condensation (C) domain; sequence PMSYAQSRLW…MQIQDGLLND (430 aa). Residues 3000-3402 form an adenylation (A) (KR) domain region; the sequence is FSQRAATDAN…GGLIFMGRLD (403 aa). Residues 3492–3511 are disordered; sequence GKVDRKALQDKPLPTEPDSS. A Carrier 2 domain is found at 3515 to 3594; it reads EALSLAEGEL…RMATLIDAEK (80 aa). Position 3554 is an O-(pantetheine 4'-phosphoryl)serine (Ser3554). A reductase (RED) domain region spans residues 3633–3833; sequence LTGSTGFLGM…RFSVLMKVVP (201 aa).

This sequence in the C-terminal section; belongs to the NRP synthetase family.

Its function is as follows. Hybrid PKS-NRPS synthetase; part of the gene cluster 23 that mediates the biosynthesis of a family of 2-pyridones known as leporins. The hybrid PKS-NRPS synthetase lepA and the enoyl reductase lepG are responsible for fusion of phenylalanine with a hexaketide and subsequent release of the stable tetramic acid precursor, pre-leporin C. Because lepA lacks a designated enoylreductase (ER) domain, the required activity is provided the enoyl reductase lepG. It is possible that the dehydrogenase lepF also participates in production of pre-leporin C. Cytochrome P450 monooxygenase lepH is then required for the ring expansion step to yield leporin C. Leporin C is then presumably further oxidized by the N-hydroxylase lepD to form leporin B. LepI may possess a function in biosynthesis upstream of lepA. Leporin B is further oxidized in the presence of ferric ion to give the leporin B trimer-iron chelate, but whether or not this reaction is catalyzed by an enzyme in the pathway or by ferric ion is not determined yet. The protein is Hybrid PKS-NRPS synthetase lepA of Aspergillus flavus (strain ATCC 200026 / FGSC A1120 / IAM 13836 / NRRL 3357 / JCM 12722 / SRRC 167).